The sequence spans 610 residues: Calcium-dependent protein kinase 1 (610 aa).

G2 carries N-myristoyl glycine lipidation. Residue C5 is the site of S-palmitoyl cysteine attachment. Residues 17–133 are disordered; it reads VSAAMWRPRD…HMKRVSSAGL (117 aa). Basic and acidic residues-rich tracts occupy residues 47 to 56 and 70 to 117; these read LRSRLSDEVQ and TDVE…DPPA. Residues 118–127 are compositionally biased toward basic residues; sequence KPKKPKHMKR. The 259-residue stretch at 150–408 folds into the Protein kinase domain; sequence YSLGRKLGQG…AHQVLCHPWV (259 aa). ATP-binding positions include 156–164 and K179; that span reads LGQGQFGTT. Catalysis depends on D274, which acts as the Proton acceptor. Residue S314 is modified to Phosphoserine. The segment at 414–444 is autoinhibitory domain; that stretch reads APDKPLDSAVLSRMKQFSAMNKFKKMALRVI. 4 EF-hand domains span residues 451–486, 487–522, 523–558, and 559–592; these read EEIAGLKEMFNMIDADKSGQITFEELKAGLKRVGAN, LKESEILDLMQAADVDNSGTIDYKEFIAATLHLNKI, EREDHLFAAFTYFDKDGSGYITPDELQQACEEFGVE, and DVRIEELMRDVDQDNDGRIDYNEFVAMMQKGSIT. Residues D464, D466, S468, Q470, E475, D500, D502, S504, T506, E511, D536, D538, S540, Y542, E547, D570, D572, D574, R576, and E581 each contribute to the Ca(2+) site.

The protein belongs to the protein kinase superfamily. Ser/Thr protein kinase family. CDPK subfamily. As to quaternary structure, interacts with 14-3-3 proteins.

It is found in the peroxisome membrane. The catalysed reaction is L-seryl-[protein] + ATP = O-phospho-L-seryl-[protein] + ADP + H(+). It carries out the reaction L-threonyl-[protein] + ATP = O-phospho-L-threonyl-[protein] + ADP + H(+). Its activity is regulated as follows. Activated by calcium. Autophosphorylation may play an important role in the regulation of the kinase activity. Functionally, may play a role in signal transduction pathways that involve calcium as a second messenger. Phosphorylates the Ca(2+)-ATPase ACA2 resulting in the inhibition of its calcium activation. This Arabidopsis thaliana (Mouse-ear cress) protein is Calcium-dependent protein kinase 1 (CPK1).